A 186-amino-acid polypeptide reads, in one-letter code: NADH-quinone oxidoreductase subunit I (186 aa).

4Fe-4S ferredoxin-type domains are found at residues 70–100 (LTTR…IQSA) and 113–142 (DRFE…MSKD). Residues Cys80, Cys83, Cys86, Cys90, Cys122, Cys125, Cys128, and Cys132 each contribute to the [4Fe-4S] cluster site.

It belongs to the complex I 23 kDa subunit family. NDH-1 is composed of 14 different subunits. Subunits NuoA, H, J, K, L, M, N constitute the membrane sector of the complex. Requires [4Fe-4S] cluster as cofactor.

It localises to the cell inner membrane. The enzyme catalyses a quinone + NADH + 5 H(+)(in) = a quinol + NAD(+) + 4 H(+)(out). Functionally, NDH-1 shuttles electrons from NADH, via FMN and iron-sulfur (Fe-S) centers, to quinones in the respiratory chain. The immediate electron acceptor for the enzyme in this species is believed to be ubiquinone. Couples the redox reaction to proton translocation (for every two electrons transferred, four hydrogen ions are translocated across the cytoplasmic membrane), and thus conserves the redox energy in a proton gradient. The protein is NADH-quinone oxidoreductase subunit I of Pelobacter propionicus (strain DSM 2379 / NBRC 103807 / OttBd1).